The primary structure comprises 1166 residues: Zinc finger CCHC domain-containing protein 2 (1166 aa).

Disordered regions lie at residues 1–85 (MLRM…GGHA), 205–240 (RAEGSRGSVEDEPSGDGEQDAEKDGPGPEGSGCAKL), 550–668 (SSAD…ARFS), and 904–982 (PASF…ISAV). A compositionally biased stretch (pro residues) spans 43–64 (PPPPPTGLPRGPPPPPSPPRGL). Over residues 65–76 (EPPVASGPTAGA) the composition is skewed to low complexity. Positions 214-223 (EDEPSGDGEQ) are enriched in acidic residues. Residues 572–587 (PQVEKEKVKKTEDRLN) show a composition bias toward basic and acidic residues. Positions 624 to 633 (SSESYSSPSS) are enriched in low complexity. Over residues 634-653 (PRHDGRESLESEEEKDRDSD) the composition is skewed to basic and acidic residues. The span at 919–947 (LPTQNSSALNAATSAQPASTGISPSQSTV) shows a compositional bias: polar residues. Positions 949–963 (PAVPTHTPGPAPSPS) are enriched in pro residues. A compositionally biased stretch (polar residues) spans 964-982 (PALTHSTAQSDSTSYISAV). Residues 1119 to 1136 (VSCYNCGVSGHYAQDCKQ) form a CCHC-type zinc finger.

This chain is Zinc finger CCHC domain-containing protein 2 (Zcchc2), found in Mus musculus (Mouse).